A 348-amino-acid polypeptide reads, in one-letter code: Fructose-1,6-bisphosphatase class 1 (348 aa).

The Mg(2+) site is built by Glu92, Asp111, Leu113, and Asp114. Substrate is bound by residues 114–117 (DGSS) and Asn204. Glu276 lines the Mg(2+) pocket.

It belongs to the FBPase class 1 family. As to quaternary structure, homotetramer. Requires Mg(2+) as cofactor.

It is found in the cytoplasm. It catalyses the reaction beta-D-fructose 1,6-bisphosphate + H2O = beta-D-fructose 6-phosphate + phosphate. The protein operates within carbohydrate biosynthesis; gluconeogenesis. The chain is Fructose-1,6-bisphosphatase class 1 from Methylorubrum extorquens (strain PA1) (Methylobacterium extorquens).